Consider the following 101-residue polypeptide: Pro-corazonin (101 aa).

An N-terminal signal peptide occupies residues 1–16 (MLVLFVLSLVVSCALC). Asparagine amide is present on Asn27. Positions 31–101 (SNFPAEISAL…REKAPNNDNY (71 aa)) are excised as a propeptide.

Belongs to the corazonin family. As to expression, expressed in central brain and the retrocerebral complex but not in antennal lobes, optic lobes or in gnathal, thoracic and abdominal ganglia (at protein level).

It is found in the secreted. Its function is as follows. Cardioactive peptide. Corazonin is probably involved in the physiological regulation of the heart beat. In Camponotus floridanus (Florida carpenter ant), this protein is Pro-corazonin.